A 217-amino-acid chain; its full sequence is Aminopyrimidine aminohydrolase (217 aa).

Substrate is bound at residue Asp-44. Cys-135 serves as the catalytic Nucleophile. Substrate contacts are provided by Tyr-139 and Tyr-165. Glu-207 functions as the Proton donor in the catalytic mechanism.

Belongs to the TenA family. Homotetramer.

It catalyses the reaction 4-amino-5-aminomethyl-2-methylpyrimidine + H2O = 4-amino-5-hydroxymethyl-2-methylpyrimidine + NH4(+). The protein operates within cofactor biosynthesis; thiamine diphosphate biosynthesis. In terms of biological role, catalyzes an amino-pyrimidine hydrolysis reaction at the C5' of the pyrimidine moiety of thiamine compounds to give a hydroxymethylpyrimidine (HMP). Displays low activity on 4-amino-5-aminomethyl-2-methylpyrimidine as substrate, indicating that the enzyme may act on a different HMP precursor that may derive from the human stomach food assumption or processing. Is probably involved in thiamine biosynthesis. Does not display thiaminase II activity, as it is unable to hydrolyze thiamine. In Helicobacter pylori (Campylobacter pylori), this protein is Aminopyrimidine aminohydrolase.